Here is a 195-residue protein sequence, read N- to C-terminus: ATP-dependent Clp protease proteolytic subunit (195 aa).

The active-site Nucleophile is the Ser-97. Residue His-122 is part of the active site.

Belongs to the peptidase S14 family. Fourteen ClpP subunits assemble into 2 heptameric rings which stack back to back to give a disk-like structure with a central cavity, resembling the structure of eukaryotic proteasomes.

It localises to the cytoplasm. It carries out the reaction Hydrolysis of proteins to small peptides in the presence of ATP and magnesium. alpha-casein is the usual test substrate. In the absence of ATP, only oligopeptides shorter than five residues are hydrolyzed (such as succinyl-Leu-Tyr-|-NHMec, and Leu-Tyr-Leu-|-Tyr-Trp, in which cleavage of the -Tyr-|-Leu- and -Tyr-|-Trp bonds also occurs).. Functionally, cleaves peptides in various proteins in a process that requires ATP hydrolysis. Has a chymotrypsin-like activity. Plays a major role in the degradation of misfolded proteins. The sequence is that of ATP-dependent Clp protease proteolytic subunit from Lactobacillus gasseri (strain ATCC 33323 / DSM 20243 / BCRC 14619 / CIP 102991 / JCM 1131 / KCTC 3163 / NCIMB 11718 / NCTC 13722 / AM63).